We begin with the raw amino-acid sequence, 379 residues long: Epoxyqueuosine reductase (379 aa).

The active-site Proton donor is Asp140. The region spanning 184-214 (FEPDTPASDLCGSCNQCVKACPTGSLLGEGK) is the 4Fe-4S ferredoxin-type domain. [4Fe-4S] cluster-binding residues include Cys194, Cys197, Cys200, Cys204, Cys220, Cys246, Cys249, and Cys253. Residues 307–332 (QRNAIIILARYKDKTAVPDLIDCLQN) form an HEAT-like PBS-type repeat.

Belongs to the QueG family. As to quaternary structure, monomer. Cob(II)alamin serves as cofactor. Requires [4Fe-4S] cluster as cofactor.

The protein localises to the cytoplasm. The enzyme catalyses epoxyqueuosine(34) in tRNA + AH2 = queuosine(34) in tRNA + A + H2O. It functions in the pathway tRNA modification; tRNA-queuosine biosynthesis. Catalyzes the conversion of epoxyqueuosine (oQ) to queuosine (Q), which is a hypermodified base found in the wobble positions of tRNA(Asp), tRNA(Asn), tRNA(His) and tRNA(Tyr). In Listeria monocytogenes serovar 1/2a (strain ATCC BAA-679 / EGD-e), this protein is Epoxyqueuosine reductase.